The primary structure comprises 444 residues: Tubulin beta-2 chain (444 aa).

GTP-binding residues include Gln-11, Glu-69, Ser-138, Gly-142, Thr-143, Gly-144, Asn-204, and Asn-226. Glu-69 serves as a coordination point for Mg(2+).

It belongs to the tubulin family. In terms of assembly, dimer of alpha and beta chains. A typical microtubule is a hollow water-filled tube with an outer diameter of 25 nm and an inner diameter of 15 nM. Alpha-beta heterodimers associate head-to-tail to form protofilaments running lengthwise along the microtubule wall with the beta-tubulin subunit facing the microtubule plus end conferring a structural polarity. Microtubules usually have 13 protofilaments but different protofilament numbers can be found in some organisms and specialized cells. The cofactor is Mg(2+).

The protein localises to the cytoplasm. The protein resides in the cytoskeleton. Its function is as follows. Tubulin is the major constituent of microtubules, a cylinder consisting of laterally associated linear protofilaments composed of alpha- and beta-tubulin heterodimers. Microtubules grow by the addition of GTP-tubulin dimers to the microtubule end, where a stabilizing cap forms. Below the cap, tubulin dimers are in GDP-bound state, owing to GTPase activity of alpha-tubulin. This is Tubulin beta-2 chain (TUBB2) from Zea mays (Maize).